A 397-amino-acid polypeptide reads, in one-letter code: Tryptophan synthase beta chain (397 aa).

Lys-91 carries the post-translational modification N6-(pyridoxal phosphate)lysine.

This sequence belongs to the TrpB family. In terms of assembly, tetramer of two alpha and two beta chains. Pyridoxal 5'-phosphate is required as a cofactor.

It carries out the reaction (1S,2R)-1-C-(indol-3-yl)glycerol 3-phosphate + L-serine = D-glyceraldehyde 3-phosphate + L-tryptophan + H2O. Its pathway is amino-acid biosynthesis; L-tryptophan biosynthesis; L-tryptophan from chorismate: step 5/5. Its function is as follows. The beta subunit is responsible for the synthesis of L-tryptophan from indole and L-serine. In Bacillus cereus (strain ZK / E33L), this protein is Tryptophan synthase beta chain.